We begin with the raw amino-acid sequence, 215 residues long: Chymomexicain (215 aa).

Cystine bridges form between cysteine 22/cysteine 63, cysteine 56/cysteine 96, and cysteine 154/cysteine 201. Cysteine 25 is an active-site residue. Residues histidine 160 and asparagine 176 contribute to the active site.

This sequence belongs to the peptidase C1 family.

Cysteine protease. The polypeptide is Chymomexicain (Jacaratia mexicana (Wild papaya)).